We begin with the raw amino-acid sequence, 189 residues long: Interferon alpha-21 (189 aa).

The N-terminal stretch at 1-23 is a signal peptide; sequence MALSFSLLMAVLVLSYKSICSLG. Cystine bridges form between Cys-24/Cys-122 and Cys-52/Cys-162.

Belongs to the alpha/beta interferon family.

It localises to the secreted. Functionally, produced by macrophages, IFN-alpha have antiviral activities. Interferon stimulates the production of two enzymes: a protein kinase and an oligoadenylate synthetase. This Homo sapiens (Human) protein is Interferon alpha-21 (IFNA21).